Consider the following 280-residue polypeptide: Orotidine 5'-phosphate decarboxylase (280 aa).

The Proton donor role is filled by lysine 96.

Belongs to the OMP decarboxylase family. Type 2 subfamily.

It carries out the reaction orotidine 5'-phosphate + H(+) = UMP + CO2. It functions in the pathway pyrimidine metabolism; UMP biosynthesis via de novo pathway; UMP from orotate: step 2/2. The protein is Orotidine 5'-phosphate decarboxylase of Parabacteroides distasonis (strain ATCC 8503 / DSM 20701 / CIP 104284 / JCM 5825 / NCTC 11152).